Here is a 135-residue protein sequence, read N- to C-terminus: Mu-like prophage FluMu protein gp46 (135 aa).

This sequence to phage Mu protein gp46.

The sequence is that of Mu-like prophage FluMu protein gp46 from Haemophilus influenzae (strain ATCC 51907 / DSM 11121 / KW20 / Rd).